Consider the following 364-residue polypeptide: Mannonate dehydratase (364 aa).

The protein belongs to the mannonate dehydratase family. Requires Fe(2+) as cofactor. The cofactor is Mn(2+).

The catalysed reaction is D-mannonate = 2-dehydro-3-deoxy-D-gluconate + H2O. It functions in the pathway carbohydrate metabolism; pentose and glucuronate interconversion. In terms of biological role, catalyzes the dehydration of D-mannonate. This Streptococcus equi subsp. zooepidemicus (strain MGCS10565) protein is Mannonate dehydratase.